We begin with the raw amino-acid sequence, 115 residues long: Large ribosomal subunit protein bL20 (115 aa).

The protein belongs to the bacterial ribosomal protein bL20 family.

Binds directly to 23S ribosomal RNA and is necessary for the in vitro assembly process of the 50S ribosomal subunit. It is not involved in the protein synthesizing functions of that subunit. The chain is Large ribosomal subunit protein bL20 from Mycoplasmoides gallisepticum (strain R(low / passage 15 / clone 2)) (Mycoplasma gallisepticum).